A 430-amino-acid chain; its full sequence is Uric acid permease PucK (430 aa).

Helical transmembrane passes span 18-38 (MLAMYAGAILVPLIVGAAIGL), 43-63 (LTYLIAIDLFMCGAATLLQLW), 67-87 (YFGIGLPVVLGCTFTAVGPMI), 97-117 (AIYGAIIAAGLIVVLAAGFFG), 122-142 (FFPPVVTGSVVMIIGISLIPT), 163-183 (LLGFGVTAFILLLFYFFKGFI), 185-205 (SIAILLGLIAGTAAAYFMGKV), 209-229 (EVLEASWLHVPSLFYFGPPTF), 233-253 (AVVTMLLVAIVSLVESTGVYF), 274-294 (AEGLAILLGGLFNAFPYTAFS), 310-330 (VIAITGIILVAIGLVPKAAAL), 333-353 (VIPTPVLGGAMIVMFGMVISY), 369-389 (LLIIASSVSLGLGATTVPALF), and 398-418 (VLAGSGIVIGSLTAIALHAFF).

Belongs to the nucleobase:cation symporter-2 (NCS2) (TC 2.A.40) family.

The protein resides in the cell membrane. Uptake of uric acid. This Bacillus subtilis (strain 168) protein is Uric acid permease PucK (pucK).